A 377-amino-acid chain; its full sequence is MSDLDYYQVLGVSRTASQEEIKRAYRKLVLKYHPDHNPGDKNAEQKIKNINEAYDILKDEKKRSAYDQLGHQAFKNSGGGNYQQHHGFTGGIDPNDIFENIFGDFMGARRSSKTAFSKKAGANLKYDISLTLEEAFYGVTKIISFKTALTCDACAGKGSLDNNSTSSCPTCRGSGVTRSQQGFFFFENTCQTCRGAGHVIKNPCTKCYGEGRYINTRNLEVKIPAGVKEGSRIKLTGEGEAGSRGGKTGDLYVCITLIPHNTFSVDGNDLHCQLDINCTTAALGGEVEVADITGSKLKLKIPAGTQNNHKLKLSGKGMQILHSDRCGNMIVHVNIKVPKSLTKSQRELMIKLDKELNEASEEGFLSKVRNFWASGSE.

The J domain occupies 5 to 70; it reads DYYQVLGVSR…KKRSAYDQLG (66 aa). The CR-type zinc finger occupies 138–216; the sequence is GVTKIISFKT…CYGEGRYINT (79 aa). The Zn(2+) site is built by Cys-151, Cys-154, Cys-168, Cys-171, Cys-190, Cys-193, Cys-204, and Cys-207. CXXCXGXG motif repeat units lie at residues 151 to 158, 168 to 175, 190 to 197, and 204 to 211; these read CDACAGKG, CPTCRGSG, CQTCRGAG, and CTKCYGEG.

This sequence belongs to the DnaJ family. In terms of assembly, homodimer. The cofactor is Zn(2+).

The protein resides in the cytoplasm. Functionally, participates actively in the response to hyperosmotic and heat shock by preventing the aggregation of stress-denatured proteins and by disaggregating proteins, also in an autonomous, DnaK-independent fashion. Unfolded proteins bind initially to DnaJ; upon interaction with the DnaJ-bound protein, DnaK hydrolyzes its bound ATP, resulting in the formation of a stable complex. GrpE releases ADP from DnaK; ATP binding to DnaK triggers the release of the substrate protein, thus completing the reaction cycle. Several rounds of ATP-dependent interactions between DnaJ, DnaK and GrpE are required for fully efficient folding. Also involved, together with DnaK and GrpE, in the DNA replication of plasmids through activation of initiation proteins. The chain is Chaperone protein DnaJ from Orientia tsutsugamushi (strain Boryong) (Rickettsia tsutsugamushi).